Consider the following 1059-residue polypeptide: Isoleucine--tRNA ligase (1059 aa).

A 'HIGH' region motif is present at residues 47–57; the sequence is PYTSGQMHLGT. Residues 606-610 carry the 'KMSKS' region motif; that stretch reads KMSKS. An ATP-binding site is contributed by K609.

The protein belongs to the class-I aminoacyl-tRNA synthetase family. IleS type 2 subfamily. In terms of assembly, monomer. It depends on Zn(2+) as a cofactor.

It is found in the cytoplasm. The enzyme catalyses tRNA(Ile) + L-isoleucine + ATP = L-isoleucyl-tRNA(Ile) + AMP + diphosphate. In terms of biological role, catalyzes the attachment of isoleucine to tRNA(Ile). As IleRS can inadvertently accommodate and process structurally similar amino acids such as valine, to avoid such errors it has two additional distinct tRNA(Ile)-dependent editing activities. One activity is designated as 'pretransfer' editing and involves the hydrolysis of activated Val-AMP. The other activity is designated 'posttransfer' editing and involves deacylation of mischarged Val-tRNA(Ile). The polypeptide is Isoleucine--tRNA ligase (Haloquadratum walsbyi (strain DSM 16790 / HBSQ001)).